A 141-amino-acid polypeptide reads, in one-letter code: Large ribosomal subunit protein uL11 (141 aa).

The protein belongs to the universal ribosomal protein uL11 family. Part of the ribosomal stalk of the 50S ribosomal subunit. Interacts with L10 and the large rRNA to form the base of the stalk. L10 forms an elongated spine to which L12 dimers bind in a sequential fashion forming a multimeric L10(L12)X complex. Post-translationally, one or more lysine residues are methylated.

Functionally, forms part of the ribosomal stalk which helps the ribosome interact with GTP-bound translation factors. This Synechococcus sp. (strain CC9902) protein is Large ribosomal subunit protein uL11.